Here is a 612-residue protein sequence, read N- to C-terminus: Dihydroxy-acid dehydratase (612 aa).

A Mg(2+)-binding site is contributed by aspartate 81. Cysteine 122 serves as a coordination point for [2Fe-2S] cluster. The Mg(2+) site is built by aspartate 123 and lysine 124. Lysine 124 bears the N6-carboxylysine mark. Residue cysteine 195 coordinates [2Fe-2S] cluster. Glutamate 491 is a Mg(2+) binding site. Serine 517 acts as the Proton acceptor in catalysis.

The protein belongs to the IlvD/Edd family. As to quaternary structure, homodimer. The cofactor is [2Fe-2S] cluster. It depends on Mg(2+) as a cofactor.

The catalysed reaction is (2R)-2,3-dihydroxy-3-methylbutanoate = 3-methyl-2-oxobutanoate + H2O. It catalyses the reaction (2R,3R)-2,3-dihydroxy-3-methylpentanoate = (S)-3-methyl-2-oxopentanoate + H2O. The protein operates within amino-acid biosynthesis; L-isoleucine biosynthesis; L-isoleucine from 2-oxobutanoate: step 3/4. It functions in the pathway amino-acid biosynthesis; L-valine biosynthesis; L-valine from pyruvate: step 3/4. Functions in the biosynthesis of branched-chain amino acids. Catalyzes the dehydration of (2R,3R)-2,3-dihydroxy-3-methylpentanoate (2,3-dihydroxy-3-methylvalerate) into 2-oxo-3-methylpentanoate (2-oxo-3-methylvalerate) and of (2R)-2,3-dihydroxy-3-methylbutanoate (2,3-dihydroxyisovalerate) into 2-oxo-3-methylbutanoate (2-oxoisovalerate), the penultimate precursor to L-isoleucine and L-valine, respectively. The chain is Dihydroxy-acid dehydratase from Sinorhizobium fredii (strain NBRC 101917 / NGR234).